The primary structure comprises 137 residues: BolA-like protein 1 (137 aa).

At Ser81 the chain carries Phosphoserine. Positions 114–137 (WRENSQLDTSPPCLGGNKKTLGTP) are disordered.

Belongs to the BolA/IbaG family. As to quaternary structure, interacts with GLRX5. In terms of tissue distribution, widely expressed.

Its subcellular location is the mitochondrion. Functionally, acts as a mitochondrial iron-sulfur (Fe-S) cluster assembly factor that facilitates (Fe-S) cluster insertion into a subset of mitochondrial proteins. Probably acts together with the monothiol glutaredoxin GLRX5. May protect cells against oxidative stress. The sequence is that of BolA-like protein 1 from Homo sapiens (Human).